Here is a 527-residue protein sequence, read N- to C-terminus: Sensory neuron membrane protein 1 (527 aa).

The Cytoplasmic segment spans residues 1–10 (MQLQKPLKIG). The helical transmembrane segment at 11 to 31 (LGMMGAGLFGIIFGWVLFPVI) threads the bilayer. Residues 32–456 (LKSQLKKEMA…LKNQLFIPKR (425 aa)) are Extracellular-facing. Residues N67 and N229 are each glycosylated (N-linked (GlcNAc...) asparagine). Cystine bridges form between C268–C333, C297–C352, and C335–C341. N440 carries an N-linked (GlcNAc...) asparagine glycan. A helical transmembrane segment spans residues 457 to 477 (IVSVVKWLLAGVGFVGLVGSL). At 478 to 527 (VYQFKGKMINFALSPSSAQVTKVNPEINQQNQPKDISIIGESQNPPKVDM) the chain is on the cytoplasmic side.

It belongs to the CD36 family. Detected in both male and female antennal tissues. Expression is two to three fold higher in male compared to female antenna.

It is found in the cell membrane. Plays an olfactory role that is not restricted to pheromone sensitivity. The protein is Sensory neuron membrane protein 1 of Ostrinia furnacalis (Asian corn borer).